We begin with the raw amino-acid sequence, 129 residues long: Fluoride-specific ion channel FluC (129 aa).

4 helical membrane passes run 4–24, 30–50, 63–83, and 95–115; these read VLIV…LGEW, GFPT…GWLL, WSLL…TFSV, and IVAS…AYIG. Na(+)-binding residues include G73 and T76.

It belongs to the fluoride channel Fluc/FEX (TC 1.A.43) family.

It is found in the cell membrane. It catalyses the reaction fluoride(in) = fluoride(out). With respect to regulation, na(+) is not transported, but it plays an essential structural role and its presence is essential for fluoride channel function. Functionally, fluoride-specific ion channel. Important for reducing fluoride concentration in the cell, thus reducing its toxicity. In Oceanobacillus iheyensis (strain DSM 14371 / CIP 107618 / JCM 11309 / KCTC 3954 / HTE831), this protein is Fluoride-specific ion channel FluC.